The primary structure comprises 29 residues: Potassium channel toxin alpha-KTx 8.3 (29 aa).

Disulfide bonds link C3–C19, C6–C24, and C10–C26.

Belongs to the short scorpion toxin superfamily. Potassium channel inhibitor family. Alpha-KTx 08 subfamily. In terms of tissue distribution, expressed by the venom gland.

The protein resides in the secreted. Specific and potent inhibitor of ClC-2/CLCN2 chloride channel. It slows ClC-2/CLCN2 activation by increasing the latency to first opening by nearly 8-fold but is unable to inhibit open channels, suggesting that this toxin inhibits channel activation gating. The polypeptide is Potassium channel toxin alpha-KTx 8.3 (Leiurus hebraeus (Hebrew deathstalker scorpion)).